The chain runs to 816 residues: Protein EFR3 homolog B (816 aa).

Positions 206-219 (SGEGTESRSPSPLQ) are enriched in polar residues. The disordered stretch occupies residues 206–230 (SGEGTESRSPSPLQASEKEKESPAE). Basic and acidic residues predominate over residues 221–230 (SEKEKESPAE).

Belongs to the EFR3 family. In terms of assembly, component of a phosphatidylinositol 4-kinase (PI4K) complex. In terms of processing, palmitoylated at its N-terminus, anchoring the protein to the plasma membrane.

Its subcellular location is the cell membrane. Component of a complex required to localize phosphatidylinositol 4-kinase (PI4K) to the plasma membrane. The complex acts as a regulator of phosphatidylinositol 4-phosphate (PtdIns(4)P) synthesis. In the complex, efr3b probably acts as the membrane-anchoring component. The polypeptide is Protein EFR3 homolog B (efr3b) (Danio rerio (Zebrafish)).